The primary structure comprises 372 residues: Chloroplast protein FOR GROWTH AND FERTILITY 2 (372 aa).

Residues 1–20 (MDRLLQPPSSHSIAPSKFQS) are disordered. A chloroplast-targeting transit peptide spans 1–78 (MDRLLQPPSS…NQSSNFLIAS (78 aa)). Polar residues predominate over residues 7–20 (PPSSHSIAPSKFQS). 7 helical membrane-spanning segments follow: residues 109–129 (VILVSAIAALLLNPILVPPAF), 161–181 (FFAGCLHTLSGPDHLAALAPL), 195–215 (ALWGCGHDAGQLIFGLLFLLL), 231–251 (VVGLTLLVIGAMGIKEASEMP), 281–301 (GIVHGLQPDALMMVLPALALP), 309–329 (FLIMFLIGTVIAMGSYTVFIG), and 352–372 (LVAIGLGLAIIVSQFFGFSLY).

In terms of tissue distribution, mostly expressed in leaves, stems and flowers, to a lower extent, in roots, floral bud, inflorescence and siliques, and, barely, in seedlings.

Its subcellular location is the plastid. The protein resides in the chloroplast membrane. It is found in the plastid membrane. Functionally, together with CGF1, essential protein which supports female gametogenesis and embryogenesis, probably by securing local energy supply. The polypeptide is Chloroplast protein FOR GROWTH AND FERTILITY 2 (Arabidopsis thaliana (Mouse-ear cress)).